A 518-amino-acid chain; its full sequence is MKLAYWMYAGPAHIGTLRVASSFRNVHAIMHAPLGDDYFNVMRSMLERERDFTPVTASVVDRHVLARGSRDKVVSNISRKGEEQRPDLIVLTPTCTSSILQEDLQNFVDRASLYSESDVILADVNHYRVNELQASDKTLEQIVRYYLDRARKEGIFNRSLTDVPSANIIGILTLGFHNQHDCRELKRLLGELGVSINQIIPEGEFLNNLKDLPRAWFNIVPYREIGLMAASFLEKEYGMPYISTTPIGISNTADFVMQVEKLMNFWATVLLGKKFHYDQYVENQTKFVSQAAWFSKSIDCQNLAGKEAVVFGDATHAASITKILSGEMGIRVSCSGTYCKHDAGWFNEQVQGLCDEVIITEDHTEVGDTIARIEPSAIFGTQMERHIGKRIDIPCGVISSPVHIQNFPLGYRPFMGYEGTNQISDLIYNSFNLGMEDHLLDVFGGHDTKGISTKSLSTGGKSIDWTPEAESELKRIPGFVRGKVKKNTEVFARQNNILKITVDVMYAAKERRSIESLA.

Asp-36 is a binding site for [4Fe-4S] cluster. The active-site Proton donor is the Asp-299. Residue Gly-434–Met-435 coordinates substrate.

Belongs to the ChlB/BchB/BchZ family. As to quaternary structure, protochlorophyllide reductase is composed of three subunits; ChlL, ChlN and ChlB. Forms a heterotetramer of two ChlB and two ChlN subunits. [4Fe-4S] cluster serves as cofactor.

Its subcellular location is the plastid. It is found in the chloroplast. It catalyses the reaction chlorophyllide a + oxidized 2[4Fe-4S]-[ferredoxin] + 2 ADP + 2 phosphate = protochlorophyllide a + reduced 2[4Fe-4S]-[ferredoxin] + 2 ATP + 2 H2O. It participates in porphyrin-containing compound metabolism; chlorophyll biosynthesis (light-independent). Component of the dark-operative protochlorophyllide reductase (DPOR) that uses Mg-ATP and reduced ferredoxin to reduce ring D of protochlorophyllide (Pchlide) to form chlorophyllide a (Chlide). This reaction is light-independent. The NB-protein (ChlN-ChlB) is the catalytic component of the complex. This chain is Light-independent protochlorophyllide reductase subunit B, found in Adiantum capillus-veneris (Maidenhair fern).